The sequence spans 265 residues: Lipopolysaccharide core heptose(I) kinase WaaP (265 aa).

Asp-162 is a catalytic residue.

This sequence belongs to the protein kinase superfamily. KdkA/RfaP family. Mg(2+) is required as a cofactor.

The protein localises to the cell inner membrane. The enzyme catalyses an L-alpha-D-Hep-(1-&gt;3)-L-alpha-D-Hep-(1-&gt;5)-[alpha-Kdo-(2-&gt;4)]-alpha-Kdo-(2-&gt;6)-lipid A + ATP = an L-alpha-D-Hep-(1-&gt;3)-4-O-phospho-L-alpha-D-Hep-(1-&gt;5)-[alpha-Kdo-(2-&gt;4)]-alpha-Kdo-(2-&gt;6)-lipid A + ADP + H(+). The catalysed reaction is L-alpha-D-Hep-(1-&gt;3)-L-alpha-D-Hep-(1-&gt;5)-[alpha-Kdo-(2-&gt;4)]-alpha-Kdo-(2-&gt;6)-lipid A (E. coli) + ATP = L-alpha-D-Hep-(1-&gt;3)-4-O-phospho-L-alpha-D-Hep-(1-&gt;5)-[alpha-Kdo-(2-&gt;4)]-alpha-Kdo-(2-&gt;6)-lipid A (E. coli) + ADP + H(+). It functions in the pathway bacterial outer membrane biogenesis; LPS core biosynthesis. Functionally, kinase involved in the biosynthesis of the core oligosaccharide region of lipopolysaccharide (LPS). Catalyzes the phosphorylation of heptose I (HepI), the first heptose added to the Kdo2-lipid A module. The protein is Lipopolysaccharide core heptose(I) kinase WaaP of Escherichia coli.